Here is a 210-residue protein sequence, read N- to C-terminus: Na(+)-translocating NADH-quinone reductase subunit D (210 aa).

6 consecutive transmembrane segments (helical) span residues 9-29 (AVLF…LGIC), 42-62 (LIMS…ISTI), 72-92 (IIVQ…VLQA), 96-116 (ATAK…IVMG), 131-151 (FLDG…VGFI), and 178-198 (MGLL…IWVL).

Belongs to the NqrDE/RnfAE family. In terms of assembly, composed of six subunits; NqrA, NqrB, NqrC, NqrD, NqrE and NqrF.

The protein localises to the cell inner membrane. It carries out the reaction a ubiquinone + n Na(+)(in) + NADH + H(+) = a ubiquinol + n Na(+)(out) + NAD(+). In terms of biological role, NQR complex catalyzes the reduction of ubiquinone-1 to ubiquinol by two successive reactions, coupled with the transport of Na(+) ions from the cytoplasm to the periplasm. NqrA to NqrE are probably involved in the second step, the conversion of ubisemiquinone to ubiquinol. In Pseudoalteromonas translucida (strain TAC 125), this protein is Na(+)-translocating NADH-quinone reductase subunit D.